The primary structure comprises 292 residues: Probable 2-(5''-triphosphoribosyl)-3'-dephosphocoenzyme-A synthase (292 aa).

This sequence belongs to the CitG/MdcB family.

The catalysed reaction is 3'-dephospho-CoA + ATP = 2'-(5''-triphospho-alpha-D-ribosyl)-3'-dephospho-CoA + adenine. The protein is Probable 2-(5''-triphosphoribosyl)-3'-dephosphocoenzyme-A synthase of Shigella boydii serotype 18 (strain CDC 3083-94 / BS512).